A 236-amino-acid chain; its full sequence is MRVDLQPAYILHARPYRDTSLLLDLLTPVYGRITAVARGVRQSKGHKRQLLNPFHRLLVNWQGKSELKLITGVETDHHYLQLQGNALYSGFYLNELLVRLLPEQDVITGLFERYEWTLDALHRGEPLEPLLREFEFMLLQGLGYALDFLHDCHSQQPIQSGYFYLCDIHQGFYSVPADSDPRFWIAGAHLLAIAAGDYSAADTRRVAKQLARLLFKPLLGKRPLKSRELFTPGSPH.

Belongs to the RecO family.

Functionally, involved in DNA repair and RecF pathway recombination. The sequence is that of DNA repair protein RecO from Cellvibrio japonicus (strain Ueda107) (Pseudomonas fluorescens subsp. cellulosa).